Reading from the N-terminus, the 392-residue chain is Alanine--glyoxylate aminotransferase (392 aa).

K209 is subject to N6-(pyridoxal phosphate)lysine. At K225 the chain carries N6-acetyllysine; alternate. N6-succinyllysine; alternate is present on K225. K234 and K312 each carry N6-acetyllysine. R360 is a substrate binding site. Positions 390 to 392 (SQL) match the Microbody targeting signal motif.

It belongs to the class-V pyridoxal-phosphate-dependent aminotransferase family. As to quaternary structure, homodimer. The cofactor is pyridoxal 5'-phosphate.

Its subcellular location is the peroxisome. The catalysed reaction is L-serine + pyruvate = 3-hydroxypyruvate + L-alanine. The enzyme catalyses glyoxylate + L-alanine = glycine + pyruvate. Peroxisomal aminotransferase that catalyzes the transamination of glyoxylate to glycine and contributes to the glyoxylate detoxification. Also catalyzes the transamination between L-serine and pyruvate and contributes to gluconeogenesis from the L-serine metabolism. This Oryctolagus cuniculus (Rabbit) protein is Alanine--glyoxylate aminotransferase.